A 466-amino-acid chain; its full sequence is Muscarinic acetylcholine receptor M2 (466 aa).

Residues 1 to 22 (MNNSTNSSNSGLALTSPYKTFE) lie on the Extracellular side of the membrane. Asparagine 2, asparagine 3, and asparagine 6 each carry an N-linked (GlcNAc...) asparagine glycan. A helical transmembrane segment spans residues 23–45 (VVFIVLVAGSLSLVTIIGNILVM). The Cytoplasmic portion of the chain corresponds to 46-59 (VSIKVNRHLQTVNN). The helical transmembrane segment at 60–80 (YFLFSLACADLIIGVFSMNLY) threads the bilayer. The Extracellular segment spans residues 81–97 (TLYTVIGYWPLGPVVCD). Cysteine 96 and cysteine 176 form a disulfide bridge. The helical transmembrane segment at 98–119 (LWLALDYVVSNASVMNLLIISF) threads the bilayer. Residues 120 to 122 (DRY) carry the Important for signaling motif. At 120-139 (DRYFCVTKPLTYPVKRTTKM) the chain is on the cytoplasmic side. The helical transmembrane segment at 140–162 (AGMMIAAAWVLSFILWAPAILFW) threads the bilayer. Residues 163-184 (QFIVGVRTVEDGECYIQFFSNA) are Extracellular-facing. Residues 185–209 (AVTFGTAIAAFYLPVIIMTVLYWHI) form a helical membrane-spanning segment. The Cytoplasmic segment spans residues 210-387 (SRASKSRIKK…PPSREKKVTR (178 aa)). A disordered region spans residues 218-320 (KKDKKEPVAN…SLGHSKDENS (103 aa)). Serine 232 bears the Phosphoserine mark. Positions 254-270 (ALEHNKIQNGKAPRDAV) are enriched in basic and acidic residues. Polar residues-rich tracts occupy residues 284 to 293 (NDSTSVSAVA) and 304 to 313 (DENTVSTSLG). A helical membrane pass occupies residues 388-410 (TILAILLAFIITWAPYNVMVLIN). Residues 411–418 (TFCAPCIP) are Extracellular-facing. Cysteine 413 and cysteine 416 are joined by a disulfide. A helical transmembrane segment spans residues 419–442 (NTVWTIGYWLCYINSTINPACYAL). The short motif at 436–440 (NPACY) is the Important for signaling element. Over 443–466 (CNATFKKTFKHLLMCHYKNIGATR) the chain is Cytoplasmic. A phosphothreonine mark is found at threonine 446, threonine 450, and threonine 465.

The protein belongs to the G-protein coupled receptor 1 family. Muscarinic acetylcholine receptor subfamily. CHRM2 sub-subfamily. As to quaternary structure, interacts with ARRB1 and ARRB2. Interacts with RACK1; the interaction regulates CHRM2 internalization. In terms of processing, phosphorylated in response to agonist treatment.

The protein resides in the cell membrane. Its subcellular location is the postsynaptic cell membrane. Functionally, the muscarinic acetylcholine receptor mediates various cellular responses, including inhibition of adenylate cyclase, breakdown of phosphoinositides and modulation of potassium channels through the action of G proteins. Primary transducing effect is adenylate cyclase inhibition. In Sus scrofa (Pig), this protein is Muscarinic acetylcholine receptor M2 (CHRM2).